The primary structure comprises 347 residues: Gas vesicle ATPase GvpN (347 aa).

A disordered region spans residues M1–T50. Positions S18 to Q42 are enriched in basic and acidic residues. G91–T98 serves as a coordination point for ATP.

It belongs to the CbbQ/NirQ/NorQ/GpvN family. In terms of assembly, forms homodimers, a GvpN-GvpO heterodimer, interacts with GvpC and GvpL, might interact with GvpA.

The protein localises to the gas vesicle. It localises to the cytoplasm. The catalysed reaction is ATP + H2O = ADP + phosphate + H(+). In terms of biological role, an ATPase that functions in gas vesicle formation. A minor component of the gas vesicle, also found in soluble extracts. Gas vesicles are hollow, gas filled proteinaceous nanostructures found in some microorganisms. They allow positioning of halobacteria at the optimal depth for growth in the poorly aerated, shallow brine pools of their habitat. Functionally, expression of a 9.5 kb mc-vac DNA fragment containing 2 divergently transcribed regions (gvpD-gvpE-gvpF-gvpG-gvpH-gvpI-gvpJ-gvpK-gvpL-gvpM and gvpA-gvpC-gvpN-gvpO) allows H.volcanii to produce gas vesicles. In Haloferax mediterranei (strain ATCC 33500 / DSM 1411 / JCM 8866 / NBRC 14739 / NCIMB 2177 / R-4) (Halobacterium mediterranei), this protein is Gas vesicle ATPase GvpN.